A 332-amino-acid polypeptide reads, in one-letter code: 2-hydroxyacid dehydrogenase homolog 2 (332 aa).

Residues 154 to 155, 233 to 235, and Asp-259 contribute to the NAD(+) site; these read KI and TSR. The active site involves Arg-235. Glu-264 is an active-site residue. His-296 acts as the Proton donor in catalysis. Residue 296–299 coordinates NAD(+); that stretch reads HQAF.

This sequence belongs to the D-isomer specific 2-hydroxyacid dehydrogenase family.

Its subcellular location is the cytoplasm. The protein resides in the nucleus. This is 2-hydroxyacid dehydrogenase homolog 2 from Schizosaccharomyces pombe (strain 972 / ATCC 24843) (Fission yeast).